The sequence spans 353 residues: Photosystem II protein D1 (353 aa).

Thr-2 bears the N-acetylthreonine mark. Thr-2 carries the phosphothreonine modification. The next 3 membrane-spanning stretches (helical) occupy residues 29-46 (YIGW…TATS), 118-133 (HFLL…EWEL), and 142-156 (WIAV…AATA). Residue His-118 coordinates chlorophyll a. Residue Tyr-126 coordinates pheophytin a. Residues Asp-170 and Glu-189 each contribute to the [CaMn4O5] cluster site. The helical transmembrane segment at 197-218 (FHMLGVAGVFGGSLFSAMHGSL) threads the bilayer. His-198 provides a ligand contact to chlorophyll a. Residues His-215 and 264 to 265 (SF) each bind a quinone. His-215 is a Fe cation binding site. His-272 is a binding site for Fe cation. Residues 274–288 (FLAAWPVVGIWFTAL) form a helical membrane-spanning segment. Residues His-332, Glu-333, Asp-342, and Ala-344 each contribute to the [CaMn4O5] cluster site. Positions 345–353 (AVEAPSING) are excised as a propeptide.

Belongs to the reaction center PufL/M/PsbA/D family. As to quaternary structure, PSII is composed of 1 copy each of membrane proteins PsbA, PsbB, PsbC, PsbD, PsbE, PsbF, PsbH, PsbI, PsbJ, PsbK, PsbL, PsbM, PsbT, PsbX, PsbY, PsbZ, Psb30/Ycf12, at least 3 peripheral proteins of the oxygen-evolving complex and a large number of cofactors. It forms dimeric complexes. The cofactor is The D1/D2 heterodimer binds P680, chlorophylls that are the primary electron donor of PSII, and subsequent electron acceptors. It shares a non-heme iron and each subunit binds pheophytin, quinone, additional chlorophylls, carotenoids and lipids. D1 provides most of the ligands for the Mn4-Ca-O5 cluster of the oxygen-evolving complex (OEC). There is also a Cl(-1) ion associated with D1 and D2, which is required for oxygen evolution. The PSII complex binds additional chlorophylls, carotenoids and specific lipids.. Tyr-161 forms a radical intermediate that is referred to as redox-active TyrZ, YZ or Y-Z. Post-translationally, C-terminally processed by CTPA; processing is essential to allow assembly of the oxygen-evolving complex and thus photosynthetic growth.

Its subcellular location is the plastid. The protein localises to the chloroplast thylakoid membrane. It carries out the reaction 2 a plastoquinone + 4 hnu + 2 H2O = 2 a plastoquinol + O2. Functionally, photosystem II (PSII) is a light-driven water:plastoquinone oxidoreductase that uses light energy to abstract electrons from H(2)O, generating O(2) and a proton gradient subsequently used for ATP formation. It consists of a core antenna complex that captures photons, and an electron transfer chain that converts photonic excitation into a charge separation. The D1/D2 (PsbA/PsbD) reaction center heterodimer binds P680, the primary electron donor of PSII as well as several subsequent electron acceptors. The sequence is that of Photosystem II protein D1 from Illicium oligandrum (Star anise).